Reading from the N-terminus, the 281-residue chain is MKEKPIIGVTPDLAKNCQKYTYADFPWYALRRNYTDAIIAAGGIPILLPYQSDTINQLMELIDGIVIPGGDEDIHPKFYEQKYAEDLVISNEERDHFEILVLKKALEKDIPILGICRGMQLLNVMFNGTLIKHIPDYIRHFSKLTYSKKFECNTEAFATTVYTLPIKLEFENAPIKTIINHTQPKPKNIVSHTINIEVSTKLSKIANNCLQTMVNSTHHQAVNKLGNDLIISAKAEDGIVEAIEATKHKFVIGVQWHPEYLNDNGIDLQLFKALVKASKYI.

The 263-residue stretch at 19–281 (KYTYADFPWY…KALVKASKYI (263 aa)) folds into the Glutamine amidotransferase type-1 domain. Positions 139–174 (RHFSKLTYSKKFECNTEAFATTVYTLPIKLEFENAP) constitute an RPE1 insert domain.

This Rickettsia prowazekii (strain Madrid E) protein is Putative glutamine amidotransferase-like protein RP404.